Here is a 249-residue protein sequence, read N- to C-terminus: ATP synthase subunit a (249 aa).

A run of 5 helical transmembrane segments spans residues 33-53 (GQVI…SIAA), 92-112 (LPFI…GALI), 131-151 (INTT…AGIS), 196-216 (LVVA…LMAL), and 217-237 (GLFT…AYIH).

It belongs to the ATPase A chain family. In terms of assembly, F-type ATPases have 2 components, CF(1) - the catalytic core - and CF(0) - the membrane proton channel. CF(1) has five subunits: alpha(3), beta(3), gamma(1), delta(1), epsilon(1). CF(0) has four main subunits: a, b, b' and c.

The protein localises to the cellular thylakoid membrane. Key component of the proton channel; it plays a direct role in the translocation of protons across the membrane. This Microcystis aeruginosa (strain NIES-843 / IAM M-2473) protein is ATP synthase subunit a.